A 335-amino-acid polypeptide reads, in one-letter code: Methionine import ATP-binding protein MetN (335 aa).

In terms of domain architecture, ABC transporter spans 2–241 (IQFQRLHKSY…PKHATTRRFV (240 aa)). Residue 38–45 (GHSGAGKS) coordinates ATP.

This sequence belongs to the ABC transporter superfamily. Methionine importer (TC 3.A.1.24) family. In terms of assembly, the complex is composed of two ATP-binding proteins (MetN), two transmembrane proteins (MetI) and a solute-binding protein (MetQ).

Its subcellular location is the cell inner membrane. The catalysed reaction is L-methionine(out) + ATP + H2O = L-methionine(in) + ADP + phosphate + H(+). It carries out the reaction D-methionine(out) + ATP + H2O = D-methionine(in) + ADP + phosphate + H(+). Its function is as follows. Part of the ABC transporter complex MetNIQ involved in methionine import. Responsible for energy coupling to the transport system. The sequence is that of Methionine import ATP-binding protein MetN from Xanthomonas axonopodis pv. citri (strain 306).